The primary structure comprises 628 residues: Monoterpene synthase like 1, chloroplastic (628 aa).

Mg(2+)-binding residues include Asp-379, Asp-383, and Asp-531. The short motif at 379–383 (DDIYD) is the DDXXD motif element.

This sequence belongs to the terpene synthase family. Tpsd subfamily. Mg(2+) serves as cofactor. Mn(2+) is required as a cofactor.

The protein resides in the plastid. It localises to the chloroplast. The protein operates within terpene metabolism; oleoresin biosynthesis. It functions in the pathway secondary metabolite biosynthesis; terpenoid biosynthesis. In terms of biological role, monoterpene synthase (TPS) involved in the biosynthesis of monoterpene natural products included in conifer oleoresin secretions and volatile emissions; these compounds contribute to biotic and abiotic stress defense against herbivores and pathogens. The sequence is that of Monoterpene synthase like 1, chloroplastic from Pinus banksiana (Jack pine).